The primary structure comprises 603 residues: Elongation factor 4 (603 aa).

Residues 6 to 188 (KYVRNFSIIA…DIVKNVPAPI (183 aa)) enclose the tr-type G domain. GTP-binding positions include 18–23 (DHGKST) and 135–138 (NKID).

This sequence belongs to the TRAFAC class translation factor GTPase superfamily. Classic translation factor GTPase family. LepA subfamily.

It is found in the cell membrane. It catalyses the reaction GTP + H2O = GDP + phosphate + H(+). Functionally, required for accurate and efficient protein synthesis under certain stress conditions. May act as a fidelity factor of the translation reaction, by catalyzing a one-codon backward translocation of tRNAs on improperly translocated ribosomes. Back-translocation proceeds from a post-translocation (POST) complex to a pre-translocation (PRE) complex, thus giving elongation factor G a second chance to translocate the tRNAs correctly. Binds to ribosomes in a GTP-dependent manner. The sequence is that of Elongation factor 4 from Finegoldia magna (strain ATCC 29328 / DSM 20472 / WAL 2508) (Peptostreptococcus magnus).